The sequence spans 345 residues: MNIAIIGATGYGGVELLRFLQHHPHVHHCSLYSSSQDGIHFSESFPHVGEIEGAILQKIDVEQMADECEVVFFATPPGVSSTLAPTLIDKGVKVIDLSGDFRLKDRSVYEMWYKRQTASDHYLQQAVYGLTEWNKEDIQKAQLLSNPGCYPTAALLGLAPLVKERLIEEDSIIVDAKSGVSGAGRKASLNTHFSEVNENVKIYKVNSHQHIPEIEQMLKAWNERIQPITFSTHLIPMTRGIMATIYAKAKKELSLETLLDLYKTSYEDSKFVRVRKPGQFPATKEVYGSNYCDIGVAYDERTGRVTVVSVIDNLVKGAAGQAIQNLNVMMGWDEESGLMLAPIYP.

The active site involves cysteine 149.

The protein belongs to the NAGSA dehydrogenase family. Type 1 subfamily.

It is found in the cytoplasm. It catalyses the reaction N-acetyl-L-glutamate 5-semialdehyde + phosphate + NADP(+) = N-acetyl-L-glutamyl 5-phosphate + NADPH + H(+). The protein operates within amino-acid biosynthesis; L-arginine biosynthesis; N(2)-acetyl-L-ornithine from L-glutamate: step 3/4. Catalyzes the NADPH-dependent reduction of N-acetyl-5-glutamyl phosphate to yield N-acetyl-L-glutamate 5-semialdehyde. The chain is N-acetyl-gamma-glutamyl-phosphate reductase from Geobacillus sp. (strain WCH70).